Consider the following 102-residue polypeptide: Guanyl-specific ribonuclease Pc (102 aa).

Intrachain disulfides connect C2–C10 and C6–C101. Residue H38 is part of the active site. E56 functions as the Proton acceptor in the catalytic mechanism. Catalysis depends on H90, which acts as the Proton donor.

This sequence belongs to the ribonuclease N1/T1 family.

It catalyses the reaction [RNA] containing guanosine + H2O = an [RNA fragment]-3'-guanosine-3'-phosphate + a 5'-hydroxy-ribonucleotide-3'-[RNA fragment].. This is Guanyl-specific ribonuclease Pc from Penicillium chrysogenum (Penicillium notatum).